The following is a 94-amino-acid chain: C-C motif chemokine 17 (94 aa).

The signal sequence occupies residues 1–23 (MAPLKMLALVILLLGASLQHIHA). Cystine bridges form between C33–C57 and C34–C73.

The protein belongs to the intercrine beta (chemokine CC) family.

Its subcellular location is the secreted. In terms of biological role, chemokine, which displays chemotactic activity for T lymphocytes, preferentially Th2 cells, but not monocytes or granulocytes. Therefore plays an important role in a wide range of inflammatory and immunological processes. Acts by binding to CCR4 at T-cell surface. Mediates GM-CSF/CSF2-driven pain and inflammation. In the brain, required to maintain the typical, highly branched morphology of hippocampal microglia under homeostatic conditions. May be important for the appropriate adaptation of microglial morphology and synaptic plasticity to acute lipopolysaccharide (LPS)-induced neuroinflammation. Plays a role in wound healing, mainly by inducing fibroblast migration into the wound. This Macaca mulatta (Rhesus macaque) protein is C-C motif chemokine 17 (CCL17).